We begin with the raw amino-acid sequence, 302 residues long: Homoserine kinase (302 aa).

Position 90-100 (90-100 (KPGSGLGSSSA)) interacts with ATP.

This sequence belongs to the GHMP kinase family. Homoserine kinase subfamily.

The protein resides in the cytoplasm. It catalyses the reaction L-homoserine + ATP = O-phospho-L-homoserine + ADP + H(+). It participates in amino-acid biosynthesis; L-threonine biosynthesis; L-threonine from L-aspartate: step 4/5. Its function is as follows. Catalyzes the ATP-dependent phosphorylation of L-homoserine to L-homoserine phosphate. This Methanococcus vannielii (strain ATCC 35089 / DSM 1224 / JCM 13029 / OCM 148 / SB) protein is Homoserine kinase.